Consider the following 366-residue polypeptide: Ribosomal RNA large subunit methyltransferase M (366 aa).

Residues Ser187, 220 to 223 (SPGG), Asp239, Asp259, and Asp276 contribute to the S-adenosyl-L-methionine site. Catalysis depends on Lys305, which acts as the Proton acceptor.

This sequence belongs to the class I-like SAM-binding methyltransferase superfamily. RNA methyltransferase RlmE family. RlmM subfamily. Monomer.

The protein resides in the cytoplasm. The catalysed reaction is cytidine(2498) in 23S rRNA + S-adenosyl-L-methionine = 2'-O-methylcytidine(2498) in 23S rRNA + S-adenosyl-L-homocysteine + H(+). Catalyzes the 2'-O-methylation at nucleotide C2498 in 23S rRNA. The sequence is that of Ribosomal RNA large subunit methyltransferase M from Tolumonas auensis (strain DSM 9187 / NBRC 110442 / TA 4).